An 890-amino-acid chain; its full sequence is DNA mismatch repair protein MutS (890 aa).

ATP is bound at residue 607 to 614 (GPNMSGKS).

Belongs to the DNA mismatch repair MutS family.

Its function is as follows. This protein is involved in the repair of mismatches in DNA. It is possible that it carries out the mismatch recognition step. This protein has a weak ATPase activity. The chain is DNA mismatch repair protein MutS from Bacillus thuringiensis (strain Al Hakam).